A 291-amino-acid chain; its full sequence is Transmembrane protein 41B (291 aa).

The disordered stretch occupies residues 1 to 39 (MAKGRVAERSQLGAHHTTPVGDGAAGTRGLAAPGSRDHQ). The residue at position 18 (T18) is a Phosphothreonine. The residue at position 35 (S35) is a Phosphoserine. 6 consecutive transmembrane segments (helical) span residues 52–72 (MSLL…FLVY), 109–129 (FYVQ…TFAI), 147–169 (LALF…LSYL), 197–217 (LINY…FINI), 225–245 (PLKV…FVAI), and 262–282 (SWNS…PAIF). The interval 140–251 (GFLYPFPLAL…FVAIKAGTTL (112 aa)) is VTT domain; required for its function in autophagy.

Belongs to the TMEM41 family. In terms of assembly, interacts with VMP1. Interacts with COPA, COPB1, VDAC1 and ERLIN2. Interacts with ATG2A. Interacts with SURF4. As to quaternary structure, (Microbial infection) Interacts with Zika virus NS4A protein and Yellow fever virus NS4B protein.

It is found in the endoplasmic reticulum membrane. It localises to the endomembrane system. Its subcellular location is the cytoplasm. The catalysed reaction is a 1,2-diacyl-sn-glycero-3-phospho-L-serine(in) = a 1,2-diacyl-sn-glycero-3-phospho-L-serine(out). It carries out the reaction cholesterol(in) = cholesterol(out). The enzyme catalyses a 1,2-diacyl-sn-glycero-3-phosphocholine(in) = a 1,2-diacyl-sn-glycero-3-phosphocholine(out). It catalyses the reaction a 1,2-diacyl-sn-glycero-3-phosphoethanolamine(in) = a 1,2-diacyl-sn-glycero-3-phosphoethanolamine(out). Phospholipid scramblase involved in lipid homeostasis and membrane dynamics processes. Has phospholipid scramblase activity toward cholesterol and phosphatidylserine, as well as phosphatidylethanolamine and phosphatidylcholine. Required for autophagosome formation: participates in early stages of autophagosome biogenesis at the endoplasmic reticulum (ER) membrane by reequilibrating the leaflets of the ER as lipids are extracted by ATG2 (ATG2A or ATG2B) to mediate autophagosome assembly. In addition to autophagy, involved in other processes in which phospholipid scramblase activity is required. Required for normal motor neuron development. In terms of biological role, (Microbial infection) Critical host factor required for infection by human coronaviruses SARS-CoV-2, HCoV-OC43, HCoV-NL63, and HCoV-229E, as well as all flaviviruses tested such as Zika virus and Yellow fever virus. Required post-entry of the virus to facilitate the ER membrane remodeling necessary to form replication organelles. This is Transmembrane protein 41B from Homo sapiens (Human).